Here is a 327-residue protein sequence, read N- to C-terminus: Tetraacyldisaccharide 4'-kinase (327 aa).

52 to 59 contributes to the ATP binding site; sequence TLGGAGKT.

This sequence belongs to the LpxK family.

The catalysed reaction is a lipid A disaccharide + ATP = a lipid IVA + ADP + H(+). Its pathway is glycolipid biosynthesis; lipid IV(A) biosynthesis; lipid IV(A) from (3R)-3-hydroxytetradecanoyl-[acyl-carrier-protein] and UDP-N-acetyl-alpha-D-glucosamine: step 6/6. Its function is as follows. Transfers the gamma-phosphate of ATP to the 4'-position of a tetraacyldisaccharide 1-phosphate intermediate (termed DS-1-P) to form tetraacyldisaccharide 1,4'-bis-phosphate (lipid IVA). This chain is Tetraacyldisaccharide 4'-kinase, found in Methylorubrum populi (strain ATCC BAA-705 / NCIMB 13946 / BJ001) (Methylobacterium populi).